A 213-amino-acid polypeptide reads, in one-letter code: Putative nascent polypeptide-associated complex subunit alpha-like protein (213 aa).

Residues 1-46 (MPGEATETVPAIEQQLLQPQAETGSGTESDSDESVPELEEQDSTQV) are disordered. Polar residues predominate over residues 15 to 28 (QLLQPQAETGSGTE). The span at 29–42 (SDSDESVPELEEQD) shows a compositional bias: acidic residues. Serine 43 and serine 131 each carry phosphoserine. The 66-residue stretch at 69-134 (RRSEKKARKA…AKIEDLSQEA (66 aa)) folds into the NAC-A/B domain. Lysine 141 carries the post-translational modification N6-acetyllysine; alternate. Lysine 141 is covalently cross-linked (Glycyl lysine isopeptide (Lys-Gly) (interchain with G-Cter in SUMO2); alternate). A Phosphothreonine modification is found at threonine 160. 3 positions are modified to phosphoserine: serine 165, serine 185, and serine 201. The region spanning 175–211 (VEIKDIELVLSQANVWGAKAVRALKNSNDIVNAIMEL) is the UBA domain. Threonine 212 carries the phosphothreonine modification.

Belongs to the NAC-alpha family.

The polypeptide is Putative nascent polypeptide-associated complex subunit alpha-like protein (Homo sapiens (Human)).